Here is a 249-residue protein sequence, read N- to C-terminus: MTLNVYFVLLSPYSLQSVPLPLTMQVIVPRRGDHVGCRNAGFGAHCGSNPQTPKLHQEHIKMVLQKTNWLRGVVAEGSFCYPKAARMPVLVWDDDLANLASLHTKGCVTETNKCRSTERFRSPGQSSYEISGDTLPSAMDILNFALRDWYLQKDNLTRKDIGSYPAGEDKGLKNMANLISDKVTAIGCGLTHWEEGKLKRALFTCNFSSSNVPGHPIYQRGDNFATKCAKTHPYYKSLCNSDEHIKPNK.

The signal sequence occupies residues 1 to 23 (MTLNVYFVLLSPYSLQSVPLPLT). A Cell attachment site motif is present at residues 31–33 (RGD). The 144-residue stretch at 64 to 207 (LQKTNWLRGV…LKRALFTCNF (144 aa)) folds into the SCP domain. Residues 220 to 222 (RGD) carry the Cell attachment site motif.

Belongs to the CRISP family. Expressed in salivary glands.

The protein resides in the secreted. In terms of biological role, inhibits platelet aggregation induced by all agonists tested (ADP, arachidonic acid, the thromboxane A2 analog U46619, thrombin, and snake venom snaclecs (TMVA that activates platelet through GPIB, and stejnulxin that specifically acts through GPVI (GP6))). May act by competing with fibrinogen for binding to glycoprotein IIb/IIIa (ITGA2B/ITGB3). This chain is Tabinhibitin 4, found in Tabanus yao (Horsefly).